The chain runs to 313 residues: Olfactory receptor 2B6 (313 aa).

Topologically, residues 1–27 (MSWANESITGEFVLLGFSDQPWLEFPL) are extracellular. N5 carries N-linked (GlcNAc...) asparagine glycosylation. A helical transmembrane segment spans residues 28-48 (FVVFLTSYIVTIFGNLNIILV). At 49–57 (SHLDPKLHT) the chain is on the cytoplasmic side. The helical transmembrane segment at 58–78 (PMYFFLTNLSVIDLCYITCTV) threads the bilayer. The Extracellular segment spans residues 79–97 (PQMLVNLRSIRKVISFGGC). A disulfide bond links C97 and C189. A helical membrane pass occupies residues 98 to 118 (VVQLFMFLALGATECVLLPVM). Over 119 to 143 (SFDRFVAICRPLHYSVIMHQRLCLQ) the chain is Cytoplasmic. A helical membrane pass occupies residues 144–164 (LAAVSWIIGFGNSVWLSILTL). At 165-200 (QLPRCGHYVIDHFLCEVPALLKLSCVDVTANEAELF) the chain is on the extracellular side. The chain crosses the membrane as a helical span at residues 201–221 (FVSVFFHLTPLSLILTSYAFI). Residues 222-244 (ARAILKIQSAEGRQKAFGTCSSH) are Cytoplasmic-facing. The chain crosses the membrane as a helical span at residues 245–265 (LIVVSLFYGTALSVYFLPPSP). The Extracellular segment spans residues 266–271 (HSKNRR). Residues 272 to 292 (KMVPLFYGIIAPMLNPLIYTL) form a helical membrane-spanning segment. Topologically, residues 293–313 (RNKEVKDAFKRLIKRVFLSKN) are cytoplasmic.

This sequence belongs to the G-protein coupled receptor 1 family.

The protein localises to the cell membrane. In terms of biological role, odorant receptor. The protein is Olfactory receptor 2B6 of Mus musculus (Mouse).